The chain runs to 396 residues: 1-deoxy-D-xylulose 5-phosphate reductoisomerase (396 aa).

NADPH-binding residues include Thr10, Gly11, Ser12, Ile13, and Asn123. Lys124 is a 1-deoxy-D-xylulose 5-phosphate binding site. Glu125 contributes to the NADPH binding site. Mn(2+) is bound at residue Asp149. 1-deoxy-D-xylulose 5-phosphate-binding residues include Ser150, Glu151, Ser185, and His208. Glu151 provides a ligand contact to Mn(2+). Gly214 is an NADPH binding site. 1-deoxy-D-xylulose 5-phosphate is bound by residues Ser221, Asn226, Lys227, and Glu230. Residue Glu230 coordinates Mn(2+).

Belongs to the DXR family. It depends on Mg(2+) as a cofactor. Requires Mn(2+) as cofactor.

It catalyses the reaction 2-C-methyl-D-erythritol 4-phosphate + NADP(+) = 1-deoxy-D-xylulose 5-phosphate + NADPH + H(+). Its pathway is isoprenoid biosynthesis; isopentenyl diphosphate biosynthesis via DXP pathway; isopentenyl diphosphate from 1-deoxy-D-xylulose 5-phosphate: step 1/6. Functionally, catalyzes the NADPH-dependent rearrangement and reduction of 1-deoxy-D-xylulose-5-phosphate (DXP) to 2-C-methyl-D-erythritol 4-phosphate (MEP). The protein is 1-deoxy-D-xylulose 5-phosphate reductoisomerase of Shewanella sp. (strain MR-7).